Consider the following 43-residue polypeptide: Delta-actitoxin-Bca1a (43 aa).

3 disulfide bridges follow: C1–C41, C3–C31, and C24–C42.

The protein resides in the secreted. It localises to the nematocyst. Binds specifically to voltage-gated sodium channels (Nav), thereby delaying their inactivation during signal transduction. Thus it strongly stimulates mammalian cardiac muscle contraction. The chain is Delta-actitoxin-Bca1a from Bunodosoma capense (Knobbly sea anemone).